A 130-amino-acid polypeptide reads, in one-letter code: S-protein homolog 30 (130 aa).

2 N-linked (GlcNAc...) asparagine glycosylation sites follow: Asn64 and Asn77.

Belongs to the plant self-incompatibility (S1) protein family.

It localises to the secreted. The sequence is that of S-protein homolog 30 from Arabidopsis thaliana (Mouse-ear cress).